Consider the following 156-residue polypeptide: Small ribosomal subunit protein uS7 (156 aa).

This sequence belongs to the universal ribosomal protein uS7 family. As to quaternary structure, part of the 30S ribosomal subunit. Contacts proteins S9 and S11.

One of the primary rRNA binding proteins, it binds directly to 16S rRNA where it nucleates assembly of the head domain of the 30S subunit. Is located at the subunit interface close to the decoding center, probably blocks exit of the E-site tRNA. The sequence is that of Small ribosomal subunit protein uS7 from Anaeromyxobacter dehalogenans (strain 2CP-C).